The following is a 267-amino-acid chain: Pro-opiomelanocortin (267 aa).

Positions 1–26 are cleaved as a signal peptide; sequence MPRLCGSRSGALLLTLLLQASMGVRG. At phenylalanine 87 the chain carries Phenylalanine amide. Disordered regions lie at residues 88–156 and 215–242; these read GRRN…RPVK and KKDEGPYKMEHFRWGSPPKDKRYGGFMT. N-linked (GlcNAc...) asparagine glycosylation occurs at asparagine 91. The segment covering 94–105 has biased composition (gly residues); that stretch reads SSGGGGGGGGAG. The propeptide occupies 109-133; it reads EEEEVAAGEGPGPRGDGVAPGPRQD. A compositionally biased stretch (basic and acidic residues) spans 131–143; the sequence is RQDKRSYSMEHFR. Position 136 is an N-acetylserine; in Corticotropin (serine 136). Valine amide is present on valine 148. Residues 215-237 show a composition bias toward basic and acidic residues; it reads KKDEGPYKMEHFRWGSPPKDKRY.

It belongs to the POMC family. Specific enzymatic cleavages at paired basic residues yield the different active peptides. As to expression, ACTH and MSH are produced by the pituitary gland.

The protein localises to the secreted. Functionally, stimulates the adrenal glands to release cortisol. Anorexigenic peptide. Increases the pigmentation of skin by increasing melanin production in melanocytes. In terms of biological role, increases the pigmentation of skin by increasing melanin production in melanocytes. Its function is as follows. Endogenous orexigenic opiate. Functionally, endogenous opiate. This Sus scrofa (Pig) protein is Pro-opiomelanocortin (POMC).